Here is a 266-residue protein sequence, read N- to C-terminus: Zinc transporter ZupT (266 aa).

Helical transmembrane passes span 8–28 (LLLTLLAGLSTGIGSAMALVV), 35–55 (FLTLALGFSAGVMLYVSFVEL), 70–90 (QAAAWVATLAFFGGIFFIWAI), 123–143 (GLFTAAAIAIHNFPEGMAVFF), 152–172 (GIVIATTIALHNIPEGMAIAV), 185–205 (FTYSFLSGLAEPLGAIVGFAI), 209–229 (WLSPPVFGSVLAAVAGIMVYI), and 246–266 (LAISGLIAGMAVMALSLLLLA). Positions 134 and 137 each coordinate Fe(2+). Residues Glu-137 and His-162 each contribute to the Zn(2+) site. Residues Asn-163, Glu-166, and Glu-195 each coordinate Fe(2+). Glu-166 contacts Zn(2+).

It belongs to the ZIP transporter (TC 2.A.5) family. ZupT subfamily.

The protein resides in the cell membrane. The catalysed reaction is Zn(2+)(in) = Zn(2+)(out). Mediates zinc uptake. May also transport other divalent cations. The sequence is that of Zinc transporter ZupT from Chlorobium phaeovibrioides (strain DSM 265 / 1930) (Prosthecochloris vibrioformis (strain DSM 265)).